A 237-amino-acid polypeptide reads, in one-letter code: 2,3-bisphosphoglycerate-dependent phosphoglycerate mutase (237 aa).

Substrate-binding positions include 8-15, 21-22, R60, 87-90, K98, 114-115, and 180-181; these read RHGQSQWN, TG, ERHY, RR, and GN. The Tele-phosphohistidine intermediate role is filled by H9. Catalysis depends on E87, which acts as the Proton donor/acceptor.

The protein belongs to the phosphoglycerate mutase family. BPG-dependent PGAM subfamily. As to quaternary structure, homodimer.

It catalyses the reaction (2R)-2-phosphoglycerate = (2R)-3-phosphoglycerate. It functions in the pathway carbohydrate degradation; glycolysis; pyruvate from D-glyceraldehyde 3-phosphate: step 3/5. In terms of biological role, catalyzes the interconversion of 2-phosphoglycerate and 3-phosphoglycerate. This is 2,3-bisphosphoglycerate-dependent phosphoglycerate mutase from Caulobacter vibrioides (strain ATCC 19089 / CIP 103742 / CB 15) (Caulobacter crescentus).